Reading from the N-terminus, the 259-residue chain is Type III pantothenate kinase (259 aa).

6 to 13 serves as a coordination point for ATP; sequence DCGNTNTL. Residue 108-111 participates in substrate binding; sequence GADR. Asp-110 acts as the Proton acceptor in catalysis. Asp-130 provides a ligand contact to K(+). An ATP-binding site is contributed by Thr-133. Thr-185 contributes to the substrate binding site.

Belongs to the type III pantothenate kinase family. As to quaternary structure, homodimer. NH4(+) is required as a cofactor. Requires K(+) as cofactor.

It localises to the cytoplasm. It catalyses the reaction (R)-pantothenate + ATP = (R)-4'-phosphopantothenate + ADP + H(+). The protein operates within cofactor biosynthesis; coenzyme A biosynthesis; CoA from (R)-pantothenate: step 1/5. Its function is as follows. Catalyzes the phosphorylation of pantothenate (Pan), the first step in CoA biosynthesis. The polypeptide is Type III pantothenate kinase (Maricaulis maris (strain MCS10) (Caulobacter maris)).